Reading from the N-terminus, the 267-residue chain is Transcription factor Spi-B (267 aa).

The interval 1-31 (MLALEAAQLDGPHLSCLYPEGVFYDLDSCKP) is TAD1 (Acidic). Positions 41–62 (LDSTWGWTEAPPAPAIAPYEAF) are TAD2. A DNA-binding region (ETS) is located at residues 174–257 (LRLYQFLLGL…VKRKLTYQFD (84 aa)).

The protein belongs to the ETS family. Can form homotypic interactions. Interacts with IRF4/Pip. Interacts with JUN. Interacts with TBP. May also interact with CREBBP and EP300. Interacts with NONO/p54(nrb). In terms of tissue distribution, expressed in the medulla of the thymus, the spleen and germinal centers of the lymph nodes. Expressed in B-cells and T-cells, expression increases during B-cell maturation and decreases during T-cell maturation.

It localises to the nucleus. Sequence specific transcriptional activator which binds to the PU-box, a purine-rich DNA sequence (5'-GAGGAA-3') that can act as a lymphoid-specific enhancer. Promotes development of plasmacytoid dendritic cells (pDCs), also known as type 2 DC precursors (pre-DC2) or natural interferon (IFN)-producing cells. These cells have the capacity to produce large amounts of interferon and block viral replication. Required for B-cell receptor (BCR) signaling, which is necessary for normal B-cell development and antigenic stimulation. The chain is Transcription factor Spi-B (Spib) from Mus musculus (Mouse).